A 215-amino-acid chain; its full sequence is Orotate phosphoribosyltransferase (215 aa).

Lysine 26 provides a ligand contact to 5-phospho-alpha-D-ribose 1-diphosphate. An orotate-binding site is contributed by 34 to 35 (FF). Residues 72–73 (YK), arginine 99, lysine 100, lysine 103, histidine 105, and 125–133 (DDVISSGIS) each bind 5-phospho-alpha-D-ribose 1-diphosphate. The orotate site is built by serine 129 and arginine 157.

The protein belongs to the purine/pyrimidine phosphoribosyltransferase family. PyrE subfamily. As to quaternary structure, homodimer. It depends on Mg(2+) as a cofactor.

The enzyme catalyses orotidine 5'-phosphate + diphosphate = orotate + 5-phospho-alpha-D-ribose 1-diphosphate. It participates in pyrimidine metabolism; UMP biosynthesis via de novo pathway; UMP from orotate: step 1/2. Catalyzes the transfer of a ribosyl phosphate group from 5-phosphoribose 1-diphosphate to orotate, leading to the formation of orotidine monophosphate (OMP). The protein is Orotate phosphoribosyltransferase of Halorhodospira halophila (strain DSM 244 / SL1) (Ectothiorhodospira halophila (strain DSM 244 / SL1)).